We begin with the raw amino-acid sequence, 248 residues long: 5'-nucleotidase SurE (248 aa).

Asp8, Asp9, Ser39, and Asn91 together coordinate a divalent metal cation.

Belongs to the SurE nucleotidase family. A divalent metal cation serves as cofactor.

Its subcellular location is the cytoplasm. It carries out the reaction a ribonucleoside 5'-phosphate + H2O = a ribonucleoside + phosphate. Functionally, nucleotidase that shows phosphatase activity on nucleoside 5'-monophosphates. This chain is 5'-nucleotidase SurE, found in Geobacter sp. (strain M21).